The sequence spans 335 residues: Syntaxin-18 (335 aa).

Over 1–309 (MAVDITLLFR…EDIREAIKNN (309 aa)) the chain is Cytoplasmic. Basic and acidic residues predominate over residues 168 to 208 (KLEPEPNTKTRESTSSEKVSRSPSKDSEENPATEERPEKIL). The disordered stretch occupies residues 168–226 (KLEPEPNTKTRESTSSEKVSRSPSKDSEENPATEERPEKILAETQPELGTWGDGKGEDE). Residues 243–305 (IGEMNSLFDE…KEGNEDIREA (63 aa)) enclose the t-SNARE coiled-coil homology domain. Residues 310-330 (AGFRVWILFFLVMCSFSLLFL) form a helical; Anchor for type IV membrane protein membrane-spanning segment. Topologically, residues 331-335 (DWYDS) are vesicular.

The protein belongs to the syntaxin family. As to quaternary structure, component of a SNARE complex consisting of STX18, USE1L, BNIP1/SEC20L, and SEC22B. RINT1/TIP20L and ZW10 are associated with the complex through interaction with BNIP1/SEC20L. Interacts directly with USE1L and BNIP1/SEC20L.

It localises to the endoplasmic reticulum membrane. Its subcellular location is the golgi apparatus membrane. Syntaxin that may be involved in targeting and fusion of Golgi-derived retrograde transport vesicles with the ER. The polypeptide is Syntaxin-18 (STX18) (Pongo abelii (Sumatran orangutan)).